We begin with the raw amino-acid sequence, 238 residues long: Transmembrane protein 127 (238 aa).

N-acetylmethionine is present on Met1. Residues 1 to 11 (MYAPGGAGLPG) show a composition bias toward gly residues. The disordered stretch occupies residues 1–27 (MYAPGGAGLPGGRRRRSPGGSALPKQP). At Ser17 the chain carries Phosphoserine. Helical transmembrane passes span 96 to 116 (IAAFCFLGILCSLSAFLLDVF), 130 to 150 (AFAHILTVLQCATVIGFSYWA), and 169 to 189 (VYVTFAVSFYLVAGAGGASIL).

The protein belongs to the TMEM127 family. In terms of tissue distribution, widely expressed.

The protein localises to the cell membrane. The protein resides in the cytoplasm. Its function is as follows. Controls cell proliferation acting as a negative regulator of TOR signaling pathway mediated by mTORC1. May act as a tumor suppressor. The polypeptide is Transmembrane protein 127 (TMEM127) (Homo sapiens (Human)).